Consider the following 608-residue polypeptide: Translation initiation factor RLI1 (608 aa).

4Fe-4S ferredoxin-type domains follow at residues 7-39 (RIAI…KLCI) and 46-75 (KIAF…IINL). ABC transporter domains follow at residues 70 to 320 (IQII…FLDG) and 345 to 568 (LQND…LKNL). 110–117 (GTNGIGKS) contributes to the ATP binding site. Residue S349 is modified to Phosphoserine. ATP is bound at residue 385-392 (GENGTGKT).

The protein belongs to the ABC transporter superfamily. ABCE family. As to quaternary structure, component of the multifactor complex (MFC) composed of at least RLI1, the eIF2 subunit SUI2, TIF5/eIF5, and the eIF3 subunits PRT1, HCR1, NIP1, RPG1, TIF34 and TIF35. The complex associates with pre-initiation complexes. Interacts with the complex YAE1:LTO1; the complex bridges the interaction between the CIA complex and RLI1.

The protein resides in the cytoplasm. It localises to the nucleus. Component of the multifactor complex (MFC) involved in translation initiation. Required for the binding of MFC to the 40S ribosome. Required for the processing and nuclear export of the 60S and 40S ribosomal subunits. In Saccharomyces cerevisiae (strain ATCC 204508 / S288c) (Baker's yeast), this protein is Translation initiation factor RLI1 (RLI1).